Consider the following 395-residue polypeptide: S-adenosylmethionine synthase (395 aa).

Residue His14 coordinates ATP. Asp16 serves as a coordination point for Mg(2+). K(+) is bound at residue Glu42. Residues Glu55 and Gln98 each contribute to the L-methionine site. The interval Gln98–Lys108 is flexible loop. Residues Asp174–Lys176, Arg240–Phe241, Asp249, Arg255–Lys256, Ala272, and Lys276 contribute to the ATP site. Asp249 serves as a coordination point for L-methionine. Lys280 contributes to the L-methionine binding site.

It belongs to the AdoMet synthase family. In terms of assembly, homotetramer; dimer of dimers. Mg(2+) serves as cofactor. The cofactor is K(+).

It is found in the cytoplasm. The enzyme catalyses L-methionine + ATP + H2O = S-adenosyl-L-methionine + phosphate + diphosphate. Its pathway is amino-acid biosynthesis; S-adenosyl-L-methionine biosynthesis; S-adenosyl-L-methionine from L-methionine: step 1/1. Functionally, catalyzes the formation of S-adenosylmethionine (AdoMet) from methionine and ATP. The overall synthetic reaction is composed of two sequential steps, AdoMet formation and the subsequent tripolyphosphate hydrolysis which occurs prior to release of AdoMet from the enzyme. This is S-adenosylmethionine synthase from Thermotoga neapolitana (strain ATCC 49049 / DSM 4359 / NBRC 107923 / NS-E).